The chain runs to 202 residues: Protein FAR-RED ELONGATED HYPOCOTYL 1 (202 aa).

Residue S39 is modified to Phosphoserine. The Nuclear localization sequence (NLS) motif lies at 40–43 (KKRK). A Nuclear export sequence (NES) motif is present at residues 54-57 (LLPL). Residue T61 is modified to Phosphothreonine.

Belongs to the FHY1 protein family. As to quaternary structure, homodimer and heterodimer with FHL. Interacts with underphosphorylated PHYA, especially upon far-red (FR) light illumination. Binds to LAF1 and HFR1. Forms PHYA/FHY1/HFR1 complex in darkness but dissociates from PHYA and HFR1 in response to continuous FR light (FRc). In terms of processing, inactivated by rapid reversible PHYA-mediated phosphorylation at Ser-39 and Thr-61 in red light (R), thus inhibiting PHYA signaling in a negative feedback loop; this ensures the seedling deetiolation process in response to a R-enriched light condition. Subsequent exposure to far-red light (FR) after the R conditions leads to dephosphorylation. The phosphorylated form is cytoplasmic only and unable to bind to chromatin at direct target genes whereas the unphosphorylated form can shuttle from cytoplasm to nucleus. In terms of tissue distribution, expressed in hypocotyl cells of etiolated plants.

It localises to the nucleus. The protein localises to the cytoplasm. In terms of biological role, key regulator of far red / red (FR/R) spectrum-specific responses essential for the adaption to changing light conditions (e.g. de-etiolation), essentially by regulating PHYA shuttling from the cytoplasm to the nucleus and by directly regulating the expression of some target genes, depending on light conditions and phosphorylation status. Binds chromatin at target genes promoters, especially in FR light conditions. Can activate transcription of different genes, some being in a phytochrome A (PHYA)-dependent and other in a PHYA-independent manners. Controls specific aspects of plant development, such as the inhibition of seed germination under FR during salt stress. Essential for light-regulated PHYA nuclear accumulation and subsequent PHYA phototropic signaling processes involved in photomorphogenesis. Mediates the association of PHYA with HFR1 and LAF1 in the nucleus in response to FR conditions. PHYA-specific signal transducer in response to continuous FR lights. Contributes to inhibition of hypocotyl elongation in continuous blue light (B). This Arabidopsis thaliana (Mouse-ear cress) protein is Protein FAR-RED ELONGATED HYPOCOTYL 1.